The sequence spans 249 residues: 1-(5-phosphoribosyl)-5-[(5-phosphoribosylamino)methylideneamino] imidazole-4-carboxamide isomerase (249 aa).

Aspartate 11 (proton acceptor) is an active-site residue. Catalysis depends on aspartate 133, which acts as the Proton donor.

It belongs to the HisA/HisF family.

Its subcellular location is the cytoplasm. The catalysed reaction is 1-(5-phospho-beta-D-ribosyl)-5-[(5-phospho-beta-D-ribosylamino)methylideneamino]imidazole-4-carboxamide = 5-[(5-phospho-1-deoxy-D-ribulos-1-ylimino)methylamino]-1-(5-phospho-beta-D-ribosyl)imidazole-4-carboxamide. Its pathway is amino-acid biosynthesis; L-histidine biosynthesis; L-histidine from 5-phospho-alpha-D-ribose 1-diphosphate: step 4/9. This chain is 1-(5-phosphoribosyl)-5-[(5-phosphoribosylamino)methylideneamino] imidazole-4-carboxamide isomerase, found in Mannheimia succiniciproducens (strain KCTC 0769BP / MBEL55E).